Here is a 186-residue protein sequence, read N- to C-terminus: Potassium-transporting ATPase KdpC subunit (186 aa).

The helical transmembrane segment at 10-30 threads the bilayer; the sequence is LTIITMVLCGFLFPLAITLIG.

It belongs to the KdpC family. In terms of assembly, the system is composed of three essential subunits: KdpA, KdpB and KdpC.

It is found in the cell membrane. In terms of biological role, part of the high-affinity ATP-driven potassium transport (or Kdp) system, which catalyzes the hydrolysis of ATP coupled with the electrogenic transport of potassium into the cytoplasm. This subunit acts as a catalytic chaperone that increases the ATP-binding affinity of the ATP-hydrolyzing subunit KdpB by the formation of a transient KdpB/KdpC/ATP ternary complex. The sequence is that of Potassium-transporting ATPase KdpC subunit from Staphylococcus aureus (strain MSSA476).